A 367-amino-acid polypeptide reads, in one-letter code: Uroporphyrinogen decarboxylase (367 aa).

M1 is modified (N-acetylmethionine). Residues R37, A39, R41, R50, D86, Y164, S219, and H339 each coordinate coproporphyrinogen I. 3 residues coordinate coproporphyrinogen III: R37, A39, and R41. Positions 86, 164, 219, and 339 each coordinate coproporphyrinogen III.

Belongs to the uroporphyrinogen decarboxylase family. Homodimer.

The protein resides in the cytoplasm. It is found in the cytosol. The catalysed reaction is uroporphyrinogen III + 4 H(+) = coproporphyrinogen III + 4 CO2. It carries out the reaction uroporphyrinogen I + 4 H(+) = coproporphyrinogen I + 4 CO2. Its pathway is porphyrin-containing compound metabolism; protoporphyrin-IX biosynthesis; coproporphyrinogen-III from 5-aminolevulinate: step 4/4. Catalyzes the sequential decarboxylation of the four acetate side chains of uroporphyrinogen to form coproporphyrinogen and participates in the fifth step in the heme biosynthetic pathway. Isomer I or isomer III of uroporphyrinogen may serve as substrate, but only coproporphyrinogen III can ultimately be converted to heme. In vitro also decarboxylates pentacarboxylate porphyrinogen I. This Homo sapiens (Human) protein is Uroporphyrinogen decarboxylase.